Reading from the N-terminus, the 351-residue chain is Large ribosomal subunit protein uL3 (351 aa).

2 disordered regions span residues 1–31 (MGHR…TPRT) and 246–271 (KGSR…GQLG).

The protein belongs to the universal ribosomal protein uL3 family. As to quaternary structure, part of the 50S ribosomal subunit. Forms a cluster with proteins L14 and L24e.

One of the primary rRNA binding proteins, it binds directly near the 3'-end of the 23S rRNA, where it nucleates assembly of the 50S subunit. This chain is Large ribosomal subunit protein uL3, found in Saccharolobus solfataricus (strain ATCC 35092 / DSM 1617 / JCM 11322 / P2) (Sulfolobus solfataricus).